The sequence spans 52 residues: Troponin C, skeletal muscle (52 aa).

EF-hand domains are found at residues 2-37 (KSEEELAEFFRIFDKNADGYIDAEELAEIIRSSGEH) and 38-52 (VTDEEIEELMKDGDK). Ca(2+) contacts are provided by D15, N17, D19, Y21, and E26.

Belongs to the troponin C family.

Troponin is the central regulatory protein of striated muscle contraction. Tn consists of three components: Tn-I which is the inhibitor of actomyosin ATPase, Tn-T which contains the binding site for tropomyosin and Tn-C. The binding of calcium to Tn-C abolishes the inhibitory action of Tn on actin filaments. The sequence is that of Troponin C, skeletal muscle from Protopterus dolloi (Slender lungfish).